We begin with the raw amino-acid sequence, 430 residues long: Pre-B-cell leukemia transcription factor 2 (430 aa).

The tract at residues 1–52 (MDERLLGPPPPGGGRGGLGLVSGEPGGPGEPPGGGDPGGGSGGVPGGRGKQD) is disordered. Residues 13–48 (GGRGGLGLVSGEPGGPGEPPGGGDPGGGSGGVPGGR) are compositionally biased toward gly residues. One can recognise a PBC domain in the interval 48–243 (RGKQDIGDIL…VMILRSRFLD (196 aa)). The interval 55-134 (DILQQIMTIT…EGVAGPEKGG (80 aa)) is PBC-A. 3 positions are modified to phosphoserine: Ser136, Ser151, and Ser159. A PBC-B region spans residues 137–243 (AAAAAAAAAS…VMILRSRFLD (107 aa)). Residues 244–306 (ARRKRRNFSK…NKRIRYKKNI (63 aa)) constitute a DNA-binding region (homeobox; TALE-type). Disordered regions lie at residues 326–347 (QGGH…GGSF) and 378–430 (SMGP…DTSN). Ser330 is modified (phosphoserine). Gly residues predominate over residues 380 to 392 (GPGGYGDNLGGGQ). Residue Ser395 is modified to Phosphoserine. Polar residues predominate over residues 403 to 418 (GSWQEAVTPSSVTSPT).

This sequence belongs to the TALE/PBX homeobox family. In terms of assembly, forms heterodimers with MEIS1 and heterotrimers with MEIS1 and HOXA9. Interacts with PBXIP1. Ubiquitously expressed.

The protein localises to the nucleus. Its function is as follows. Transcriptional activator that binds the sequence 5'-ATCAATCAA-3'. Activates transcription of PF4 in complex with MEIS1. The sequence is that of Pre-B-cell leukemia transcription factor 2 (PBX2) from Homo sapiens (Human).